The following is a 199-amino-acid chain: Transgelin-3 (199 aa).

The Calponin-homology (CH) domain occupies 24-136 (ADLENKLVDW…RTLMALGSVA (113 aa)). S163 is modified (phosphoserine). One copy of the Calponin-like repeat lies at 174–199 (IGLQMGSNKGASQAGMTGYGMPRQIM). Residues 178–188 (MGSNKGASQAG) show a composition bias toward polar residues. The interval 178–199 (MGSNKGASQAGMTGYGMPRQIM) is disordered.

Belongs to the calponin family.

The sequence is that of Transgelin-3 (Tagln3) from Mus musculus (Mouse).